A 446-amino-acid polypeptide reads, in one-letter code: Thymidine phosphorylase (446 aa).

It belongs to the thymidine/pyrimidine-nucleoside phosphorylase family. In terms of assembly, homodimer.

It catalyses the reaction thymidine + phosphate = 2-deoxy-alpha-D-ribose 1-phosphate + thymine. Its pathway is pyrimidine metabolism; dTMP biosynthesis via salvage pathway; dTMP from thymine: step 1/2. The enzymes which catalyze the reversible phosphorolysis of pyrimidine nucleosides are involved in the degradation of these compounds and in their utilization as carbon and energy sources, or in the rescue of pyrimidine bases for nucleotide synthesis. In Psychromonas ingrahamii (strain DSM 17664 / CCUG 51855 / 37), this protein is Thymidine phosphorylase.